The sequence spans 527 residues: Glucose transporter 1B/1C/1D/1F/2B (527 aa).

The disordered stretch occupies residues 1–22; sequence MTERRDNVSHAPDAIEGPNDGA. Topologically, residues 1–43 are cytoplasmic; it reads MTERRDNVSHAPDAIEGPNDGAHAEDTSPGFFSLENLGVAQVQ. Residues 44–64 form a helical membrane-spanning segment; sequence VVGGTLNGYVIGYVAVYLLLY. Residues 65 to 118 are Extracellular-facing; that stretch reads LTATECKFTTEGACGGRKIYGCKWSGTTCKFENPKCSEGSDPSDSCKNEVAYTS. A helical transmembrane segment spans residues 119–139; that stretch reads VYSGIFACAMIVGSMVGSIIA. At 140 to 151 the chain is on the cytoplasmic side; the sequence is GKCITTFGLKKS. A helical transmembrane segment spans residues 152-172; sequence FIIVSITCTIACVVVQVAIEY. At 173–175 the chain is on the extracellular side; sequence NNY. Residues 176 to 196 form a helical membrane-spanning segment; sequence YALCTGRVLIGLGVGILCSVF. Residues 197-213 lie on the Cytoplasmic side of the membrane; the sequence is PMYVNENAHPKLCKMDG. Residues 214–234 traverse the membrane as a helical segment; that stretch reads VLFQVFTTLGIMLAAMLGLIL. Residues 235–249 are Extracellular-facing; sequence DKTGASKEEANMAGR. A helical membrane pass occupies residues 250–270; it reads LHVFSAVPLGLSVAMFLVGMF. The Cytoplasmic segment spans residues 271–299; the sequence is LRESTATFAQDDDGKADGGMDPNEYGWGQ. The helical transmembrane segment at 300-320 threads the bilayer; the sequence is MLWPLFMGAVTAGTLQLTGIN. Residues 321–338 lie on the Extracellular side of the membrane; it reads AVMNYAPKITENLGMDPS. Residues 339-359 traverse the membrane as a helical segment; that stretch reads LGNFLVMAWNFVTSLVAIPLA. The Cytoplasmic portion of the chain corresponds to 360 to 372; sequence SRFTMRQMFITCS. Residues 373–393 traverse the membrane as a helical segment; sequence FVASCMCLFLCGIPVFPGVAG. Residues 394-403 are Extracellular-facing; sequence KEVKNGVATT. A helical transmembrane segment spans residues 404 to 424; that stretch reads GIALFIAAFEFGVGSCFFVLA. Over 425-436 the chain is Cytoplasmic; the sequence is QDLFPPSFRPKG. A helical membrane pass occupies residues 437 to 457; it reads GSFVVMMQFIFNILINLLYPI. Over 458–475 the chain is Extracellular; sequence TTEAISGGATGNQDKGQA. A helical membrane pass occupies residues 476-496; it reads VAFILFGLIGLICSVLQFFYL. Topologically, residues 497–527 are cytoplasmic; it reads YPYDANQDHENDHGGEPVEQKTYPVEASPRN. Residues 506–515 are compositionally biased toward basic and acidic residues; the sequence is ENDHGGEPVE. The tract at residues 506-527 is disordered; that stretch reads ENDHGGEPVEQKTYPVEASPRN.

The protein belongs to the major facilitator superfamily. Sugar transporter (TC 2.A.1.1) family.

It localises to the membrane. Facilitative glucose transporter. In Trypanosoma brucei brucei, this protein is Glucose transporter 1B/1C/1D/1F/2B (THT1B).